The chain runs to 270 residues: Tryptophan synthase alpha chain (270 aa).

Residues glutamate 57 and aspartate 68 each act as proton acceptor in the active site.

This sequence belongs to the TrpA family. Tetramer of two alpha and two beta chains.

The catalysed reaction is (1S,2R)-1-C-(indol-3-yl)glycerol 3-phosphate + L-serine = D-glyceraldehyde 3-phosphate + L-tryptophan + H2O. Its pathway is amino-acid biosynthesis; L-tryptophan biosynthesis; L-tryptophan from chorismate: step 5/5. Functionally, the alpha subunit is responsible for the aldol cleavage of indoleglycerol phosphate to indole and glyceraldehyde 3-phosphate. In Mycobacterium bovis (strain ATCC BAA-935 / AF2122/97), this protein is Tryptophan synthase alpha chain.